Reading from the N-terminus, the 461-residue chain is Bacterial E1-like protein BilD (461 aa).

Residue Cys-385 is the Glycyl thioester intermediate of the active site.

Its function is as follows. Component of the Bil (bacterial ISG15-like) antiviral defense system, composed of BilA, BilB, BilC and BilD. The Bil system specifically conjugates a ubiquitin-like moiety (bilA) to the bacteriophage central tail fiber (CTF, or tip attachment protein J) via reactions involving E1 (bilD) and E2 (bilB). Modifies CTF of phage SECphi27 and SECphi4, which probably interferes with assembly of the phage tail. Also modifies T5 baseplate hub protein pb3 (gene D16), but not gp27 of phage T6 (Bil defends against T6). BilD (E1) catalyzes the first step in conjugation. Activates ubiquitin-like BilA by first adenylating its C-terminal glycine residue with ATP, and then conjugates it to the side chain of a cysteine residue in E1 (this protein), yielding a ubiquitin-E1 thioester and free AMP. Bil-encoding bacteria produce mostly defective phage SECphi27, many of which have phage assembly defects, including no tails. SECphi27 phage progeny produced in E.coli with the Bil system inject less DNA into naive host cells, maybe because the phage are less able to adsorb and inject their DNA into host cells. Expression of the Bil system in E.coli (strain MG1655) confers about 100-fold resistance to phage SECphi27, SECphi18, SECphi6, SECphi4 and T5, but not to SECphi17. When cells expressing the Bil system are infected by phage SECphi27 at low multiplicity of infection (0.03 MOI) the culture survives, at 3.0 MOI the culture collapses at the same time as cells without the Bil system. The chain is Bacterial E1-like protein BilD from Collimonas sp. (strain OK412).